The following is a 174-amino-acid chain: Stigma-specific STIG1-like protein 4 (174 aa).

The N-terminal stretch at 1–25 (MMSIKLTLCALIFFLLNSLLHHVLG) is a signal peptide. Residues 140 to 174 (PSSQPGKRHRRHKFHRPRPPPSPDSKLNYDDHDDE) form a disordered region. Residues 145–157 (GKRHRRHKFHRPR) are compositionally biased toward basic residues.

The protein belongs to the STIG1 family.

It localises to the secreted. Its function is as follows. Endosperm-specific cysteine-rich protein that acts downstream of BHLH95/ZOU to modify the interface between embryo and endosperm and mediate the separation of these two tissues during seed development. Necessary for the biogenesis of the embryo sheath, an extracuticular endosperm-derived structure at the surface of the embryo. Required for the separation of embryo and endosperm, and for normal progression of the embryo through the endosperm tissue. Required for the formation of a normal embryonic cuticle. This is Stigma-specific STIG1-like protein 4 from Arabidopsis thaliana (Mouse-ear cress).